The chain runs to 170 residues: Peptide deformylase (170 aa).

The Fe cation site is built by Cys-94 and His-136. The active site involves Glu-137. A Fe cation-binding site is contributed by His-140.

This sequence belongs to the polypeptide deformylase family. Fe(2+) serves as cofactor.

It catalyses the reaction N-terminal N-formyl-L-methionyl-[peptide] + H2O = N-terminal L-methionyl-[peptide] + formate. Functionally, removes the formyl group from the N-terminal Met of newly synthesized proteins. Requires at least a dipeptide for an efficient rate of reaction. N-terminal L-methionine is a prerequisite for activity but the enzyme has broad specificity at other positions. This is Peptide deformylase from Agrobacterium fabrum (strain C58 / ATCC 33970) (Agrobacterium tumefaciens (strain C58)).